The chain runs to 245 residues: Ureidoacrylate amidohydrolase RutB (245 aa).

The active-site Proton acceptor is the Asp41. Residue Lys150 is part of the active site. Cys183 functions as the Nucleophile in the catalytic mechanism.

It belongs to the isochorismatase family. RutB subfamily.

The enzyme catalyses (Z)-3-ureidoacrylate + H2O + H(+) = (Z)-3-aminoacrylate + NH4(+) + CO2. It carries out the reaction (Z)-3-ureidoacrylate + H2O = (Z)-3-aminoacrylate + carbamate + H(+). The catalysed reaction is (Z)-2-methylureidoacrylate + H2O + H(+) = (Z)-2-methylaminoacrylate + NH4(+) + CO2. Its function is as follows. Hydrolyzes ureidoacrylate to form aminoacrylate and carbamate. The carbamate hydrolyzes spontaneously, thereby releasing one of the nitrogen atoms of the pyrimidine ring as ammonia and one of its carbon atoms as CO2. The chain is Ureidoacrylate amidohydrolase RutB from Pseudomonas syringae pv. syringae (strain B728a).